The sequence spans 193 residues: Potassium-transporting ATPase KdpC subunit (193 aa).

Residues 7-27 (PLIVVFVVLVAVTGLAYPAVM) form a helical membrane-spanning segment.

The protein belongs to the KdpC family. As to quaternary structure, the system is composed of three essential subunits: KdpA, KdpB and KdpC.

It is found in the cell inner membrane. Its function is as follows. Part of the high-affinity ATP-driven potassium transport (or Kdp) system, which catalyzes the hydrolysis of ATP coupled with the electrogenic transport of potassium into the cytoplasm. This subunit acts as a catalytic chaperone that increases the ATP-binding affinity of the ATP-hydrolyzing subunit KdpB by the formation of a transient KdpB/KdpC/ATP ternary complex. The chain is Potassium-transporting ATPase KdpC subunit from Burkholderia mallei (strain NCTC 10247).